Here is a 609-residue protein sequence, read N- to C-terminus: GDP-Man:Man(3)GlcNAc(2)-PP-Dol alpha-1,2-mannosyltransferase (609 aa).

M1 is a topological domain (lumenal). The helical transmembrane segment at 2–22 (YLILLVVLAVYVTYKLITTVL) threads the bilayer. Over 23-195 (PHHLLIPSQN…NLIDGNYWKH (173 aa)) the chain is Cytoplasmic. Residues 196–216 (FTLIGQLFGGILLSLEAMYEL) constitute an intramembrane region (helical). Over 217–455 (SPDVWIDTMG…FGLNAMWNEH (239 aa)) the chain is Cytoplasmic. The segment at residues 456–476 (FGIGVVEYMARGCTPIVHASA) is an intramembrane region (helical). Topologically, residues 477-609 (GPLLDMIGRN…EKRTKVEQVY (133 aa)) are cytoplasmic.

Belongs to the glycosyltransferase group 1 family.

It localises to the endoplasmic reticulum membrane. The catalysed reaction is an alpha-D-Man-(1-&gt;3)-[alpha-D-Man-(1-&gt;6)]-beta-D-Man-(1-&gt;4)-beta-D-GlcNAc-(1-&gt;4)-alpha-D-GlcNAc-diphospho-di-trans,poly-cis-dolichol + 2 GDP-alpha-D-mannose = an alpha-D-Man-(1-&gt;2)-alpha-D-Man-(1-&gt;2)-alpha-D-Man-(1-&gt;3)-[alpha-D-Man-(1-&gt;6)]-beta-D-Man-(1-&gt;4)-beta-D-GlcNAc-(1-&gt;4)-alpha-D-GlcNAc-diphospho-di-trans,poly-cis-dolichol + 2 GDP + 2 H(+). Its pathway is protein modification; protein glycosylation. Its function is as follows. GDP-Man:Man(3)GlcNAc(2)-PP-Dol alpha-1,2-mannosyltransferase that operates in the biosynthetic pathway of dolichol-linked oligosaccharides, the glycan precursors employed in protein asparagine (N)-glycosylation. The assembly of dolichol-linked oligosaccharides begins on the cytosolic side of the endoplasmic reticulum membrane and finishes in its lumen. The sequential addition of sugars to dolichol pyrophosphate produces dolichol-linked oligosaccharides containing fourteen sugars, including two GlcNAcs, nine mannoses and three glucoses. Once assembled, the oligosaccharide is transferred from the lipid to nascent proteins by oligosaccharyltransferases. Catalyzes, on the cytoplasmic face of the endoplasmic reticulum, the addition of the fourth and fifth mannose residues to the dolichol-linked oligosaccharide chain, to produce Man(5)GlcNAc(2)-PP-dolichol core oligosaccharide. The sequence is that of GDP-Man:Man(3)GlcNAc(2)-PP-Dol alpha-1,2-mannosyltransferase (ALG11) from Candida albicans (strain SC5314 / ATCC MYA-2876) (Yeast).